The chain runs to 465 residues: Botryococcus squalene synthase (465 aa).

Positions 48 and 73 each coordinate NADP(+). Mg(2+)-binding residues include Asp76, Glu79, and Asp80. NADP(+) is bound by residues Arg215, Lys315, and Arg317. 2 consecutive transmembrane segments (helical) span residues 395-415 (AIRLLLLVGVVAYFAYAFNLG) and 429-449 (ILDLSQKGLAVASVALLLLVL).

The protein belongs to the phytoene/squalene synthase family.

It localises to the membrane. The catalysed reaction is presqualene diphosphate + NADPH + H(+) = squalene + diphosphate + NADP(+). Produces squalene when coexpressed with SSL-1 and bisfarnesyl ether and a very small amount of squalene when incubated alone in the presence of NADPH. The chain is Botryococcus squalene synthase (SSL-2) from Botryococcus braunii (Green alga).